Here is a 352-residue protein sequence, read N- to C-terminus: Selenide, water dikinase (352 aa).

The active site involves Cys23. ATP is bound by residues Lys26 and 54-56 (SRD). Asp57 serves as a coordination point for Mg(2+). ATP contacts are provided by residues Asp74, Asp97, and 145-147 (GHS). A Mg(2+)-binding site is contributed by Asp97. Asp233 contributes to the Mg(2+) binding site.

It belongs to the selenophosphate synthase 1 family. Class I subfamily. In terms of assembly, homodimer. The cofactor is Mg(2+).

The enzyme catalyses hydrogenselenide + ATP + H2O = selenophosphate + AMP + phosphate + 2 H(+). Synthesizes selenophosphate from selenide and ATP. The polypeptide is Selenide, water dikinase (Shewanella baltica (strain OS155 / ATCC BAA-1091)).